Consider the following 215-residue polypeptide: Thymidylate kinase (215 aa).

Residue 7-14 participates in ATP binding; the sequence is GMEGSGKS.

Belongs to the thymidylate kinase family.

The catalysed reaction is dTMP + ATP = dTDP + ADP. In terms of biological role, phosphorylation of dTMP to form dTDP in both de novo and salvage pathways of dTTP synthesis. The polypeptide is Thymidylate kinase (Nitratidesulfovibrio vulgaris (strain DSM 19637 / Miyazaki F) (Desulfovibrio vulgaris)).